The chain runs to 140 residues: Protein NrdI (140 aa).

This sequence belongs to the NrdI family.

In terms of biological role, probably involved in ribonucleotide reductase function. The sequence is that of Protein NrdI from Photorhabdus laumondii subsp. laumondii (strain DSM 15139 / CIP 105565 / TT01) (Photorhabdus luminescens subsp. laumondii).